A 416-amino-acid chain; its full sequence is Serine hydroxymethyltransferase 1 (416 aa).

(6S)-5,6,7,8-tetrahydrofolate is bound by residues Leu-121 and 125–127 (GHL). Lys-229 is modified (N6-(pyridoxal phosphate)lysine). (6S)-5,6,7,8-tetrahydrofolate contacts are provided by residues Glu-245 and 354-356 (SPF).

It belongs to the SHMT family. As to quaternary structure, homodimer. The cofactor is pyridoxal 5'-phosphate.

It localises to the cytoplasm. It carries out the reaction (6R)-5,10-methylene-5,6,7,8-tetrahydrofolate + glycine + H2O = (6S)-5,6,7,8-tetrahydrofolate + L-serine. The protein operates within one-carbon metabolism; tetrahydrofolate interconversion. It participates in amino-acid biosynthesis; glycine biosynthesis; glycine from L-serine: step 1/1. In terms of biological role, catalyzes the reversible interconversion of serine and glycine with tetrahydrofolate (THF) serving as the one-carbon carrier. This reaction serves as the major source of one-carbon groups required for the biosynthesis of purines, thymidylate, methionine, and other important biomolecules. Also exhibits THF-independent aldolase activity toward beta-hydroxyamino acids, producing glycine and aldehydes, via a retro-aldol mechanism. This Vibrio vulnificus (strain CMCP6) protein is Serine hydroxymethyltransferase 1.